The primary structure comprises 402 residues: NADH-quinone oxidoreductase subunit D (402 aa).

This sequence belongs to the complex I 49 kDa subunit family. In terms of assembly, NDH-1 is composed of 14 different subunits. Subunits NuoB, C, D, E, F, and G constitute the peripheral sector of the complex.

The protein resides in the cell inner membrane. It carries out the reaction a quinone + NADH + 5 H(+)(in) = a quinol + NAD(+) + 4 H(+)(out). NDH-1 shuttles electrons from NADH, via FMN and iron-sulfur (Fe-S) centers, to quinones in the respiratory chain. The immediate electron acceptor for the enzyme in this species is believed to be ubiquinone. Couples the redox reaction to proton translocation (for every two electrons transferred, four hydrogen ions are translocated across the cytoplasmic membrane), and thus conserves the redox energy in a proton gradient. In Nitrobacter winogradskyi (strain ATCC 25391 / DSM 10237 / CIP 104748 / NCIMB 11846 / Nb-255), this protein is NADH-quinone oxidoreductase subunit D.